The primary structure comprises 365 residues: Isopentenyl-diphosphate delta-isomerase (365 aa).

8–9 (RK) is a binding site for substrate. FMN contacts are provided by residues 67–69 (SIT), serine 97, and asparagine 126. 97–99 (SQR) provides a ligand contact to substrate. Glutamine 160 is a substrate binding site. A Mg(2+)-binding site is contributed by glutamate 161. FMN is bound by residues lysine 192, threonine 222, 272 to 274 (GVR), and 293 to 294 (AL).

Belongs to the IPP isomerase type 2 family. Homooctamer. Dimer of tetramers. The cofactor is FMN. NADPH is required as a cofactor. Mg(2+) serves as cofactor.

It localises to the cytoplasm. It catalyses the reaction isopentenyl diphosphate = dimethylallyl diphosphate. Involved in the biosynthesis of isoprenoids. Catalyzes the 1,3-allylic rearrangement of the homoallylic substrate isopentenyl (IPP) to its allylic isomer, dimethylallyl diphosphate (DMAPP). In Methanosarcina acetivorans (strain ATCC 35395 / DSM 2834 / JCM 12185 / C2A), this protein is Isopentenyl-diphosphate delta-isomerase.